The following is a 153-amino-acid chain: Sperm surface protein Sp17 (153 aa).

The tract at residues 74 to 117 is disordered; the sequence is FKVPSGATESKEAPPEKSEPEKETPQEVVKEQETQVSFVEEVST. Positions 82–106 are enriched in basic and acidic residues; it reads ESKEAPPEKSEPEKETPQEVVKEQE. An IQ domain is found at 122-151; that stretch reads AAAAAVKIQAAFRGHKARKEVKIMKESSIE.

As to quaternary structure, homodimer. May interact with ROPN1. Testis- and sperm-specific.

Its subcellular location is the membrane. Its function is as follows. Sperm surface zona pellucida binding protein. Helps to bind spermatozoa to the zona pellucida with high affinity. Might function in binding zona pellucida and carbohydrates. In Notamacropus eugenii (Tammar wallaby), this protein is Sperm surface protein Sp17 (SPA17).